A 494-amino-acid polypeptide reads, in one-letter code: Probable cytosol aminopeptidase (494 aa).

The Mn(2+) site is built by lysine 260 and aspartate 265. Lysine 272 is an active-site residue. Aspartate 283, aspartate 342, and glutamate 344 together coordinate Mn(2+). Arginine 346 is a catalytic residue.

It belongs to the peptidase M17 family. The cofactor is Mn(2+).

Its subcellular location is the cytoplasm. The catalysed reaction is Release of an N-terminal amino acid, Xaa-|-Yaa-, in which Xaa is preferably Leu, but may be other amino acids including Pro although not Arg or Lys, and Yaa may be Pro. Amino acid amides and methyl esters are also readily hydrolyzed, but rates on arylamides are exceedingly low.. The enzyme catalyses Release of an N-terminal amino acid, preferentially leucine, but not glutamic or aspartic acids.. In terms of biological role, presumably involved in the processing and regular turnover of intracellular proteins. Catalyzes the removal of unsubstituted N-terminal amino acids from various peptides. The chain is Probable cytosol aminopeptidase from Bacillus cereus (strain ZK / E33L).